The sequence spans 364 residues: Probable UDP-arabinopyranose mutase 1 (364 aa).

The short motif at 110–112 is the DXD motif element; the sequence is DDD. An N-linked (Glc...) arginine glycan is attached at Arg-158.

The protein belongs to the RGP family. In terms of assembly, homopentamer or homohexamer. Requires Mn(2+) as cofactor. Mg(2+) is required as a cofactor. Reversibly glycosylated by UDP-glucose, UDP-xylose and UDP-galactose.

Its subcellular location is the secreted. The protein resides in the cell wall. It is found in the cell junction. It localises to the plasmodesma. The protein localises to the golgi apparatus. The catalysed reaction is UDP-beta-L-arabinofuranose = UDP-beta-L-arabinopyranose. In terms of biological role, probable UDP-L-arabinose mutase involved in the biosynthesis of cell wall non-cellulosic polysaccharides. Was initially shown to possess an autoglycosylating activity which is dependent on the presence of UDP-glucose and manganese. This Zea mays (Maize) protein is Probable UDP-arabinopyranose mutase 1.